The chain runs to 488 residues: (Z)-2-((N-methylformamido)methylene)-5-hydroxybutyrolactone dehydrogenase (488 aa).

NAD(+) is bound by residues 149–150 (WN) and 226–227 (GG). Catalysis depends on glutamate 248, which acts as the Proton acceptor. Leucine 249 provides a ligand contact to NAD(+). The Nucleophile role is filled by cysteine 282. An NAD(+)-binding site is contributed by glutamate 380.

The protein belongs to the aldehyde dehydrogenase family. Homodimer.

The enzyme catalyses (Z)-2-((N-methylformamido)methylene)-5-hydroxybutanolactone + NAD(+) + H2O = (E)-2-((N-methylformamido) methylene)succinate + NADH + 3 H(+). In terms of biological role, involved in the degradation of the pyridine ring of trigonelline (TG; N-methylnicotinate) into succinate and methylamine as carbon and nitrogen sources, respectively. Catalyzes the NAD(+)-dependent oxidation of (Z)-2-((N-methylformamido)methylene)-5-hydroxybutyrolactone (MFMB) to yield (E)-2-((N-methylformamido)methylene)succinate (MFMS). In Acinetobacter baylyi (strain ATCC 33305 / BD413 / ADP1), this protein is (Z)-2-((N-methylformamido)methylene)-5-hydroxybutyrolactone dehydrogenase.